The sequence spans 132 residues: Small ribosomal subunit protein uS8 (132 aa).

In terms of assembly, part of the 30S ribosomal subunit. Contacts proteins S5 and S12. Post-translationally, a modified and unmodified form exist; the nature of the modification(s) is unknown.

Its function is as follows. One of the primary rRNA binding proteins, it binds directly to 16S rRNA central domain where it helps coordinate assembly of the platform of the 30S subunit. The chain is Small ribosomal subunit protein uS8 from Rhodopseudomonas palustris (strain ATCC BAA-98 / CGA009).